Here is a 111-residue protein sequence, read N- to C-terminus: Cytochrome c (111 aa).

Ala1 is subject to N-acetylalanine. Residues Cys22, Cys25, and His26 each contribute to the heme c site. At Lys80 the chain carries N6,N6,N6-trimethyllysine. Met88 is a heme c binding site. An N6,N6,N6-trimethyllysine modification is found at Lys94.

This sequence belongs to the cytochrome c family. In terms of processing, binds 1 heme c group covalently per subunit.

It localises to the mitochondrion intermembrane space. Its function is as follows. Electron carrier protein. The oxidized form of the cytochrome c heme group can accept an electron from the heme group of the cytochrome c1 subunit of cytochrome reductase. Cytochrome c then transfers this electron to the cytochrome oxidase complex, the final protein carrier in the mitochondrial electron-transport chain. The sequence is that of Cytochrome c from Sesamum indicum (Oriental sesame).